The sequence spans 328 residues: MEKAMKYAKIAGSGGYLPERVVTNDDLAAELATRQISTSDEWIVERTGIRQRHLAERGVTTSQLATEAARRAMDDAGVQADEIDMIIVATSTPDYVFPSTACLVQANLGAKGGAAFDVQAVCSGFVYAMTTADNFIRAGRARCALVIGAEVFSRILDWNDRGTCVLFGDGAGAVVLKAADEPGILAAHLHADGSQTKILCAAGNVAYGDVTGDPFLRMDGQAVFKQAVTVLDRSARDVCAEAGVEVDDIDWLIPHQANVRILNFLARKLRVPTERVVITMDQHANTSAASVPLALDVARRDGRVKPGQLVLMQGVGGGFTWGSVLARM.

Residues C122 and H255 contribute to the active site. The tract at residues 256 to 260 (QANVR) is ACP-binding. N285 is a catalytic residue.

The protein belongs to the thiolase-like superfamily. FabH family. As to quaternary structure, homodimer.

The protein localises to the cytoplasm. The catalysed reaction is malonyl-[ACP] + acetyl-CoA + H(+) = 3-oxobutanoyl-[ACP] + CO2 + CoA. It participates in lipid metabolism; fatty acid biosynthesis. Catalyzes the condensation reaction of fatty acid synthesis by the addition to an acyl acceptor of two carbons from malonyl-ACP. Catalyzes the first condensation reaction which initiates fatty acid synthesis and may therefore play a role in governing the total rate of fatty acid production. Possesses both acetoacetyl-ACP synthase and acetyl transacylase activities. Its substrate specificity determines the biosynthesis of branched-chain and/or straight-chain of fatty acids. The chain is Beta-ketoacyl-[acyl-carrier-protein] synthase III from Bordetella pertussis (strain Tohama I / ATCC BAA-589 / NCTC 13251).